The chain runs to 339 residues: Phenylalanine--tRNA ligase alpha subunit (339 aa).

Residue glutamate 253 coordinates Mg(2+).

The protein belongs to the class-II aminoacyl-tRNA synthetase family. Phe-tRNA synthetase alpha subunit type 1 subfamily. Tetramer of two alpha and two beta subunits. Requires Mg(2+) as cofactor.

Its subcellular location is the cytoplasm. It catalyses the reaction tRNA(Phe) + L-phenylalanine + ATP = L-phenylalanyl-tRNA(Phe) + AMP + diphosphate + H(+). The polypeptide is Phenylalanine--tRNA ligase alpha subunit (Thioalkalivibrio sulfidiphilus (strain HL-EbGR7)).